A 315-amino-acid chain; its full sequence is Olfactory receptor 5A1 (315 aa).

Residues 1 to 28 are Extracellular-facing; that stretch reads MSITKAWNSSSVTMFILLGFTDHPELQA. N-linked (GlcNAc...) asparagine glycosylation occurs at Asn8. Residues 29-52 form a helical membrane-spanning segment; that stretch reads LLFVTFLGIYLTTLAWNLALIFLI. Over 53 to 60 the chain is Cytoplasmic; that stretch reads RGDTHLHT. Residues 61–82 traverse the membrane as a helical segment; that stretch reads PMYFFLSNLSFIDICYSSAVAP. Topologically, residues 83–103 are extracellular; it reads NMLTDFFWEQKTISFVGCAAQ. A disulfide bridge connects residues Cys100 and Cys192. The helical transmembrane segment at 104–123 threads the bilayer; sequence FFFFVGMGLSECLLLTAMAY. The Cytoplasmic segment spans residues 124-142; the sequence is DRYAAISSPLLYPTIMTQG. Residues 143-161 form a helical membrane-spanning segment; the sequence is LCTRMVVGAYVGGFLSSLI. The Extracellular portion of the chain corresponds to 162–198; sequence QASSIFRLHFCGPNIINHFFCDLPPVLALSCSDTFLS. Residues 199-222 traverse the membrane as a helical segment; it reads QVVNFLVVVTVGGTSFLQLLISYG. At 223-239 the chain is on the cytoplasmic side; the sequence is YIVSAVLKIPSAEGRWK. Residues 240–262 traverse the membrane as a helical segment; the sequence is ACNTCASHLMVVTLLFGTALFVY. Residues 263 to 275 lie on the Extracellular side of the membrane; the sequence is LRPSSSYLLGRDK. Residues 276–295 form a helical membrane-spanning segment; the sequence is VVSVFYSLVIPMLNPLIYSL. Over 296-315 the chain is Cytoplasmic; the sequence is RNKEIKDALWKVLERKKVFS.

It belongs to the G-protein coupled receptor 1 family.

It localises to the cell membrane. Its function is as follows. Odorant receptor. This chain is Olfactory receptor 5A1 (OR5A1), found in Homo sapiens (Human).